A 249-amino-acid chain; its full sequence is Geranylgeranylglyceryl phosphate synthase (249 aa).

Mg(2+) contacts are provided by aspartate 20 and serine 49. Residues 169 to 175, 200 to 201, and 222 to 223 each bind sn-glycerol 1-phosphate; these read YLDAGSG, GG, and GN.

It belongs to the GGGP/HepGP synthase family. Group II subfamily. As to quaternary structure, homohexamer. Requires Mg(2+) as cofactor.

It catalyses the reaction sn-glycerol 1-phosphate + (2E,6E,10E)-geranylgeranyl diphosphate = sn-3-O-(geranylgeranyl)glycerol 1-phosphate + diphosphate. In terms of biological role, prenyltransferase that catalyzes the transfer of the geranylgeranyl moiety of geranylgeranyl diphosphate (GGPP) to the C3 hydroxyl of sn-glycerol-1-phosphate (G1P). This chain is Geranylgeranylglyceryl phosphate synthase, found in Spirosoma linguale (strain ATCC 33905 / DSM 74 / LMG 10896 / Claus 1).